The sequence spans 240 residues: Ribonuclease 3 (240 aa).

The RNase III domain maps to 9–141 (VEELQKRLGV…LLAALYLDQG (133 aa)). Residue E54 coordinates Mg(2+). Residue D58 is part of the active site. Residues D127 and E130 each coordinate Mg(2+). E130 is an active-site residue. Residues 168–237 (DYKTALQEIV…ARKAYEKLVA (70 aa)) form the DRBM domain.

It belongs to the ribonuclease III family. In terms of assembly, homodimer. Requires Mg(2+) as cofactor.

The protein localises to the cytoplasm. It catalyses the reaction Endonucleolytic cleavage to 5'-phosphomonoester.. Digests double-stranded RNA. Involved in the processing of primary rRNA transcript to yield the immediate precursors to the large and small rRNAs (23S and 16S). Processes some mRNAs, and tRNAs when they are encoded in the rRNA operon. Processes pre-crRNA and tracrRNA of type II CRISPR loci if present in the organism. The sequence is that of Ribonuclease 3 from Thermotoga neapolitana (strain ATCC 49049 / DSM 4359 / NBRC 107923 / NS-E).